The primary structure comprises 740 residues: Copalyl diphosphate synthase 2 (740 aa).

Lysine 154 serves as a coordination point for substrate. Residues aspartate 287 and aspartate 289 each contribute to the Mg(2+) site. Positions 287–290 match the DXDD motif motif; sequence DADD. A substrate-binding site is contributed by lysine 373.

It belongs to the terpene synthase family. Requires Mg(2+) as cofactor.

It catalyses the reaction (2E,6E,10E)-geranylgeranyl diphosphate = (+)-copalyl diphosphate. Its pathway is secondary metabolite biosynthesis; terpenoid biosynthesis. In terms of biological role, monofunctional diterpene synthase converting geranylgeranyl diphosphate to copalyl diphosphate. The chain is Copalyl diphosphate synthase 2 (CPS2) from Selaginella moellendorffii (Spikemoss).